A 211-amino-acid polypeptide reads, in one-letter code: Uracil phosphoribosyltransferase (211 aa).

Residues Arg78, Arg103, and Asp130–Thr138 each bind 5-phospho-alpha-D-ribose 1-diphosphate. Residues Ile195 and Gly200 to Ala202 each bind uracil. Asp201 lines the 5-phospho-alpha-D-ribose 1-diphosphate pocket.

This sequence belongs to the UPRTase family. It depends on Mg(2+) as a cofactor.

The enzyme catalyses UMP + diphosphate = 5-phospho-alpha-D-ribose 1-diphosphate + uracil. The protein operates within pyrimidine metabolism; UMP biosynthesis via salvage pathway; UMP from uracil: step 1/1. Its activity is regulated as follows. Allosterically activated by GTP. Its function is as follows. Catalyzes the conversion of uracil and 5-phospho-alpha-D-ribose 1-diphosphate (PRPP) to UMP and diphosphate. The protein is Uracil phosphoribosyltransferase of Streptomyces coelicolor (strain ATCC BAA-471 / A3(2) / M145).